The primary structure comprises 392 residues: Selenide, water dikinase 1 (392 aa).

Cys31 is a catalytic residue. ATP contacts are provided by residues Lys32, 67–69, Asp87, Asp110, and 161–164; these read GMD and GGQT. Residue Asp69 coordinates Mg(2+). Mg(2+) is bound at residue Asp110. Asp265 contributes to the Mg(2+) binding site. At Thr387 the chain carries Phosphothreonine.

It belongs to the selenophosphate synthase 1 family. Class II subfamily. In terms of assembly, homodimer. It depends on Mg(2+) as a cofactor.

The protein localises to the cell membrane. Its subcellular location is the nucleus membrane. The enzyme catalyses hydrogenselenide + ATP + H2O = selenophosphate + AMP + phosphate + 2 H(+). In terms of biological role, synthesizes selenophosphate from selenide and ATP. This chain is Selenide, water dikinase 1 (sephs1), found in Danio rerio (Zebrafish).